We begin with the raw amino-acid sequence, 374 residues long: MSKKLFRKGILALAVSSVMGLSTHALADVVIGVAGPHTGANASFGEQYWRGASQAAEDINAAGGINGEKIKLVKADDACEPKQAVAVANRLVDQDKAIAVVGHFCSSSTIPASEVYDEAGIIAITPGSTNPQVTERGLSGMFRMCGRDDQQGVVAGDYIVNVLKAKKVAVIHDKDTYGQGLADATRAQLNKLGVKEVLYEGLTRGEKDFNALVTKIRASGAEVVYFGGLHPEAGPLVRQMREQGLTARFMSDDGVVTDELATTAGGPQYVKGVLMTFGADPRLIPDGKAVVEKFRAGGFEPEGYTLYSYASIQSLAAAFNGAGANDPAKAAEWLKSHPVQTVMGKKEWDKKGDLKVSDYVVYEWDDKGKYHQLP.

An N-terminal signal peptide occupies residues 1 to 27 (MSKKLFRKGILALAVSSVMGLSTHALA).

This sequence belongs to the leucine-binding protein family.

It is found in the periplasm. Binds primarily proteinogenic amino acids. This chain is Amino acid binding protein, found in Pseudomonas aeruginosa (strain ATCC 15692 / DSM 22644 / CIP 104116 / JCM 14847 / LMG 12228 / 1C / PRS 101 / PAO1).